The chain runs to 129 residues: Small ribosomal subunit protein uS11 (129 aa).

It belongs to the universal ribosomal protein uS11 family. In terms of assembly, part of the 30S ribosomal subunit. Interacts with proteins S7 and S18. Binds to IF-3.

In terms of biological role, located on the platform of the 30S subunit, it bridges several disparate RNA helices of the 16S rRNA. Forms part of the Shine-Dalgarno cleft in the 70S ribosome. In Rhodopseudomonas palustris (strain BisB18), this protein is Small ribosomal subunit protein uS11.